A 1022-amino-acid polypeptide reads, in one-letter code: Probable E3 ubiquitin-protein ligase HERC6 (1022 aa).

RCC1 repeat units follow at residues 41–92 (NHRV…AVCH), 93–145 (KGRV…ALSK), 147–198 (SQVF…ALSL), 200–253 (GTSF…VLTQ), and 254–304 (DGKV…AYVH). Positions 693–1017 (EATDFCKVLV…INNNRGFVSP (325 aa)) constitute an HECT domain. Catalysis depends on cysteine 985, which acts as the Glycyl thioester intermediate.

As to expression, detected in brain, heart, placenta and testis.

The protein resides in the cytoplasm. The protein localises to the cytosol. It catalyses the reaction S-ubiquitinyl-[E2 ubiquitin-conjugating enzyme]-L-cysteine + [acceptor protein]-L-lysine = [E2 ubiquitin-conjugating enzyme]-L-cysteine + N(6)-ubiquitinyl-[acceptor protein]-L-lysine.. It participates in protein modification; protein ubiquitination. Its function is as follows. E3 ubiquitin-protein ligase which accepts ubiquitin from an E2 ubiquitin-conjugating enzyme in the form of a thioester and then directly transfers the ubiquitin to targeted substrates. The protein is Probable E3 ubiquitin-protein ligase HERC6 (HERC6) of Homo sapiens (Human).